A 184-amino-acid chain; its full sequence is Large ribosomal subunit protein uL5c (184 aa).

Belongs to the universal ribosomal protein uL5 family. In terms of assembly, part of the 50S ribosomal subunit; contacts the 5S rRNA.

Its subcellular location is the plastid. The protein resides in the chloroplast. Functionally, binds 5S rRNA, forms part of the central protuberance of the 50S subunit. This Nephroselmis olivacea (Green alga) protein is Large ribosomal subunit protein uL5c (rpl5).